A 214-amino-acid chain; its full sequence is Ribosomal RNA small subunit methyltransferase G (214 aa).

Residues G81, M86, 132 to 133 (VE), and R147 contribute to the S-adenosyl-L-methionine site.

It belongs to the methyltransferase superfamily. RNA methyltransferase RsmG family.

It is found in the cytoplasm. The catalysed reaction is guanosine(527) in 16S rRNA + S-adenosyl-L-methionine = N(7)-methylguanosine(527) in 16S rRNA + S-adenosyl-L-homocysteine. Functionally, specifically methylates the N7 position of guanine in position 527 of 16S rRNA. This is Ribosomal RNA small subunit methyltransferase G from Pseudomonas aeruginosa (strain LESB58).